The following is a 546-amino-acid chain: Chaperonin GroEL 1 (546 aa).

Residues 30–33, lysine 51, 87–91, glycine 415, 479–481, and aspartate 495 contribute to the ATP site; these read TLGP, DGTTT, and NAA. The interval 526–546 is disordered; it reads KEDAPMPGGMPGGMGGMGMDM. Positions 534–546 are enriched in gly residues; it reads GMPGGMGGMGMDM.

The protein belongs to the chaperonin (HSP60) family. As to quaternary structure, forms a cylinder of 14 subunits composed of two heptameric rings stacked back-to-back. Interacts with the co-chaperonin GroES.

The protein localises to the cytoplasm. The enzyme catalyses ATP + H2O + a folded polypeptide = ADP + phosphate + an unfolded polypeptide.. Functionally, together with its co-chaperonin GroES, plays an essential role in assisting protein folding. The GroEL-GroES system forms a nano-cage that allows encapsulation of the non-native substrate proteins and provides a physical environment optimized to promote and accelerate protein folding. This Burkholderia vietnamiensis (strain G4 / LMG 22486) (Burkholderia cepacia (strain R1808)) protein is Chaperonin GroEL 1.